An 83-amino-acid chain; its full sequence is Apolipoprotein C-I (83 aa).

An N-terminal signal peptide occupies residues 1-26 (MRLILSLPVLAVVLAMVLEGPAPAQA).

Belongs to the apolipoprotein C1 family.

The protein resides in the secreted. Its function is as follows. Inhibitor of lipoprotein binding to the low density lipoprotein (LDL) receptor, LDL receptor-related protein, and very low density lipoprotein (VLDL) receptor. Associates with high density lipoproteins (HDL) and the triacylglycerol-rich lipoproteins in the plasma and makes up about 10% of the protein of the VLDL and 2% of that of HDL. Appears to interfere directly with fatty acid uptake and is also the major plasma inhibitor of cholesteryl ester transfer protein (CETP). Binds free fatty acids and reduces their intracellular esterification. Modulates the interaction of APOE with beta-migrating VLDL and inhibits binding of beta-VLDL to the LDL receptor-related protein. In Rousettus aegyptiacus (Egyptian fruit bat), this protein is Apolipoprotein C-I (APOC1).